We begin with the raw amino-acid sequence, 470 residues long: UDP-N-acetylmuramate--L-alanine ligase (470 aa).

118-124 serves as a coordination point for ATP; that stretch reads GTHGKTT.

It belongs to the MurCDEF family.

The protein resides in the cytoplasm. It carries out the reaction UDP-N-acetyl-alpha-D-muramate + L-alanine + ATP = UDP-N-acetyl-alpha-D-muramoyl-L-alanine + ADP + phosphate + H(+). Its pathway is cell wall biogenesis; peptidoglycan biosynthesis. Cell wall formation. The polypeptide is UDP-N-acetylmuramate--L-alanine ligase (Cereibacter sphaeroides (strain ATCC 17025 / ATH 2.4.3) (Rhodobacter sphaeroides)).